Here is a 421-residue protein sequence, read N- to C-terminus: AP-3 complex subunit mu (421 aa).

The 243-residue stretch at 178–420 folds into the MHD domain; it reads QNKIFFDIIE…TTKAGKFQVR (243 aa).

This sequence belongs to the adaptor complexes medium subunit family. In terms of assembly, adaptor protein complex 3 (AP-3) is a heterotetramer composed of two large adaptins (delta-type subunit and beta-type subunit), a medium adaptin (mu-type subunit) and a small adaptin (sigma-type subunit).

Its subcellular location is the endosome membrane. Part of the AP-3 complex, an adaptor-related complex which is essential for the compartmentalization of the endocytic pathway. This Dictyostelium discoideum (Social amoeba) protein is AP-3 complex subunit mu (apm3).